Consider the following 187-residue polypeptide: Probable cobalt-precorrin-6B C(15)-methyltransferase (decarboxylating) (187 aa).

S-adenosyl-L-methionine-binding positions include threonine 17, 41–45 (GCGTG), aspartate 62, and glycine 91.

The protein belongs to the methyltransferase superfamily. Archaeal-type CbiT family.

It carries out the reaction Co-precorrin-6B + S-adenosyl-L-methionine = Co-precorrin-7 + S-adenosyl-L-homocysteine + CO2. It functions in the pathway cofactor biosynthesis; adenosylcobalamin biosynthesis; cob(II)yrinate a,c-diamide from sirohydrochlorin (anaerobic route): step 8/10. In terms of biological role, catalyzes the methylation of C-15 in cobalt-precorrin-6B followed by the decarboxylation of C-12 to form cobalt-precorrin-7. The chain is Probable cobalt-precorrin-6B C(15)-methyltransferase (decarboxylating) from Methanobrevibacter smithii (strain ATCC 35061 / DSM 861 / OCM 144 / PS).